The chain runs to 769 residues: Ligand-dependent nuclear receptor-interacting factor 1 (769 aa).

Residues lysine 259 and lysine 279 each participate in a glycyl lysine isopeptide (Lys-Gly) (interchain with G-Cter in SUMO2) cross-link. A compositionally biased stretch (polar residues) spans 378 to 387 (QIDQQNSVSP). Residues 378–400 (QIDQQNSVSPDTPVRKDTLQTVS) are disordered. Residues serine 402, serine 430, and serine 436 each carry the phosphoserine modification. Residue lysine 446 forms a Glycyl lysine isopeptide (Lys-Gly) (interchain with G-Cter in SUMO2) linkage. Serine 502 carries the post-translational modification Phosphoserine. Residues 528–562 (DQEPKIHNEMASTSDKGAQGRNDKKDSQGRSNKAL) form a disordered region. Positions 580–584 (LRVCL) match the PxVxL motif motif. The residue at position 599 (serine 599) is a Phosphoserine. Lysine 605 participates in a covalent cross-link: Glycyl lysine isopeptide (Lys-Gly) (interchain with G-Cter in SUMO2). Short sequence motifs (nuclear localization signal) lie at residues 628-631 (KKRK) and 642-645 (KKRK). Residue lysine 702 forms a Glycyl lysine isopeptide (Lys-Gly) (interchain with G-Cter in SUMO2) linkage. Threonine 732 carries the phosphothreonine modification. Residues 740 to 769 (IRDEKIRRLKQVLREKEAALEEMRKKMHQK) are a coiled coil.

It belongs to the LRIF1 family. Interacts with RARA. Interacts with SMCHD1; leading to recruitment to inactivated chromosome X in females. Interacts (via PxVxL motif) with HP1 (CBX1/HP1-beta, CBX3/HP1-gamma and CBX5/HP1-alpha). In terms of tissue distribution, widely expressed, with the highest expression levels in heart, liver and placenta.

The protein resides in the chromosome. Its subcellular location is the nucleus matrix. Its function is as follows. Together with SMCHD1, involved in chromosome X inactivation in females by promoting the compaction of heterochromatin. Also able to repress the ligand-induced transcriptional activity of retinoic acid receptor alpha (RARA), possibly through direct recruitment of histone deacetylases. Also required for silencing of the DUX4 locus in somatic cells. This Homo sapiens (Human) protein is Ligand-dependent nuclear receptor-interacting factor 1.